Consider the following 439-residue polypeptide: MSYIPHSEEETKEILSKLGLESLEDLFSHIPKELFAKDFSFPEPKSEEELRRIFERACEDTELPLYFIGAGAYDRIIPSVIWQILSRGEFLTPYTPYQAEASQGTLQAIFEYQSLICELTGMDVANASMYDGASALAEAVLMARAIKGKGDTVVLSKALNPLYRRTVKTYLRGYEDKIVEVPYTEEGTTDLNNLEEVLKESEVHALAVQYPNFFGFVEPLKEIGELCKKYEVPFVVFVDPIALSILKPPAEFGADIVVGEGQQMGIPLSFGGPYVGFFATKKEHVRKMPGRLVGMGEDIEGKRAFTLVLQTREQHIRRERATSNICTNQNLMALANLLYMVLLGKEGMKKVAVQSLSKALYFKKELMKKGFEEVFTGKHLWEFPLRHESLKAIYRKLLKEKIVLGLPLDRFYEDLKNTTLIAVTEKRTKEEIDSVLALL.

This sequence belongs to the GcvP family. N-terminal subunit subfamily. The glycine cleavage system is composed of four proteins: P, T, L and H. In this organism, the P 'protein' is a heterodimer of two subunits.

The catalysed reaction is N(6)-[(R)-lipoyl]-L-lysyl-[glycine-cleavage complex H protein] + glycine + H(+) = N(6)-[(R)-S(8)-aminomethyldihydrolipoyl]-L-lysyl-[glycine-cleavage complex H protein] + CO2. Functionally, the glycine cleavage system catalyzes the degradation of glycine. The P protein binds the alpha-amino group of glycine through its pyridoxal phosphate cofactor; CO(2) is released and the remaining methylamine moiety is then transferred to the lipoamide cofactor of the H protein. The sequence is that of Probable glycine dehydrogenase (decarboxylating) subunit 1 from Aquifex aeolicus (strain VF5).